The primary structure comprises 75 residues: uncharacterized protein (75 aa).

This is an uncharacterized protein from Acidithiobacillus ferridurans.